A 436-amino-acid chain; its full sequence is Putative F-box/FBD/LRR-repeat protein At5g44960 (436 aa).

Residues 4-50 (CDYINELPDSLLTQILLDLRTKDSVKTSVSSKRWRNLWLNVPGLDLF) form the F-box domain. 2 LRR repeats span residues 287–310 (ISSV…SKLG) and 397–420 (SAVL…SYKK). Residues 355–407 (EENIDFHEVPQCLISTLEYVHINKLMMMEQSGIKLVNYFIENSAVLKKLTLRF) enclose the FBD domain.

The chain is Putative F-box/FBD/LRR-repeat protein At5g44960 from Arabidopsis thaliana (Mouse-ear cress).